A 147-amino-acid polypeptide reads, in one-letter code: Myoglobin (147 aa).

Positions 2–141 constitute a Globin domain; the sequence is ADFDAVLKFW…FIADMDANYK (140 aa). H60 is a binding site for nitrite. Position 60 (H60) interacts with O2. H89 contributes to the heme b binding site.

It belongs to the globin family. Monomeric.

Its subcellular location is the cytoplasm. The protein resides in the sarcoplasm. The catalysed reaction is Fe(III)-heme b-[protein] + nitric oxide + H2O = Fe(II)-heme b-[protein] + nitrite + 2 H(+). It catalyses the reaction H2O2 + AH2 = A + 2 H2O. In terms of biological role, monomeric heme protein which primary function is to store oxygen and facilitate its diffusion within muscle tissues. Reversibly binds oxygen through a pentacoordinated heme iron and enables its timely and efficient release as needed during periods of heightened demand. Depending on the oxidative conditions of tissues and cells, and in addition to its ability to bind oxygen, it also has a nitrite reductase activity whereby it regulates the production of bioactive nitric oxide. Under stress conditions, like hypoxia and anoxia, it also protects cells against reactive oxygen species thanks to its pseudoperoxidase activity. In Scomber japonicus (Chub mackerel), this protein is Myoglobin (mb).